A 203-amino-acid chain; its full sequence is Large ribosomal subunit protein uL22 (203 aa).

Polar residues-rich tracts occupy residues 116-126 (QNGGESQNQEY) and 134-167 (VSKS…DSQL). A disordered region spans residues 116-203 (QNGGESQNQE…TVLAQEKEVK (88 aa)). The span at 168–194 (SAKTNSTTTAKKTDLADNNTKNDATNT) shows a compositional bias: low complexity.

It belongs to the universal ribosomal protein uL22 family. Part of the 50S ribosomal subunit.

Its function is as follows. This protein binds specifically to 23S rRNA; its binding is stimulated by other ribosomal proteins, e.g. L4, L17, and L20. It is important during the early stages of 50S assembly. It makes multiple contacts with different domains of the 23S rRNA in the assembled 50S subunit and ribosome. The globular domain of the protein is located near the polypeptide exit tunnel on the outside of the subunit, while an extended beta-hairpin is found that lines the wall of the exit tunnel in the center of the 70S ribosome. The sequence is that of Large ribosomal subunit protein uL22 from Mesomycoplasma hyopneumoniae (strain 232) (Mycoplasma hyopneumoniae).